We begin with the raw amino-acid sequence, 427 residues long: Tol-Pal system protein TolB (427 aa).

Residues 1 to 23 (MKLLKRLVSVFAIVLAVGSNAFA) form the signal peptide.

The protein belongs to the TolB family. In terms of assembly, the Tol-Pal system is composed of five core proteins: the inner membrane proteins TolA, TolQ and TolR, the periplasmic protein TolB and the outer membrane protein Pal. They form a network linking the inner and outer membranes and the peptidoglycan layer.

The protein localises to the periplasm. Part of the Tol-Pal system, which plays a role in outer membrane invagination during cell division and is important for maintaining outer membrane integrity. The polypeptide is Tol-Pal system protein TolB (Haemophilus influenzae (strain PittGG)).